Reading from the N-terminus, the 99-residue chain is Small ribosomal subunit protein bS18 (99 aa).

Residues 1–25 (MAESKGRPGSASQRPTGGDKAIAGQ) form a disordered region.

It belongs to the bacterial ribosomal protein bS18 family. Part of the 30S ribosomal subunit. Forms a tight heterodimer with protein bS6.

In terms of biological role, binds as a heterodimer with protein bS6 to the central domain of the 16S rRNA, where it helps stabilize the platform of the 30S subunit. This Solibacter usitatus (strain Ellin6076) protein is Small ribosomal subunit protein bS18.